We begin with the raw amino-acid sequence, 254 residues long: Large ribosomal subunit protein uL2 (254 aa).

It belongs to the universal ribosomal protein uL2 family.

This is Large ribosomal subunit protein uL2 (RPL2) from Candida glabrata (strain ATCC 2001 / BCRC 20586 / JCM 3761 / NBRC 0622 / NRRL Y-65 / CBS 138) (Yeast).